The sequence spans 508 residues: PTS system mannitol-specific EIICB component (508 aa).

At 1-30 (MSQTETQENKGLGRKVQAFGSFLSSMIMPN) the chain is on the cytoplasmic side. The region spanning 19 to 351 (FGSFLSSMIM…LKFTKEPEED (333 aa)) is the PTS EIIC type-2 domain. A helical membrane pass occupies residues 31–52 (IGAFIAWGFIAAIFIDGGWWPN). Over 53–56 (KDLS) the chain is Extracellular. The chain crosses the membrane as a helical span at residues 57 to 77 (ELAGPMISYLIPLLIAYSGGR). The Cytoplasmic portion of the chain corresponds to 78-141 (LIHEMRGGII…QGFEMLFNNF (64 aa)). Residues 142–163 (SAGILGFIMTIVGFKILAPIME) traverse the membrane as a helical segment. The Extracellular portion of the chain corresponds to 164–172 (FIMHILSLA). The helical transmembrane segment at 173-193 (VEALVHAHLLPLVSIIVEPAK) threads the bilayer. The Cytoplasmic portion of the chain corresponds to 194-280 (IVFLNNAINH…VLMRPLLFIA (87 aa)). The helical transmembrane segment at 281–300 (VILGGMTGVATYSLLDFGFK) threads the bilayer. Residues 301-320 (SPASPGSFIVYMLNAPKGEF) are Extracellular-facing. The helical transmembrane segment at 321–342 (LHMVLGVLLAAIVSFIVAALIL) threads the bilayer. Topologically, residues 343–508 (KFTKEPEEDL…RYDELLENLK (166 aa)) are cytoplasmic. Residues 355–400 (ATEKMEASKGKKSSVSSKLKGNEDNNATSTTASTSTSENNEEQSEE) are disordered. The span at 367-392 (SSVSSKLKGNEDNNATSTTASTSTSE) shows a compositional bias: low complexity. Residues 420-508 (NHVIFACDAG…RYDELLENLK (89 aa)) enclose the PTS EIIB type-2 domain. C426 functions as the Phosphocysteine intermediate; for EIIB activity in the catalytic mechanism. The residue at position 426 (C426) is a Phosphocysteine; by EIIA.

As to quaternary structure, homodimer.

The protein resides in the cell membrane. The catalysed reaction is D-mannitol(out) + N(pros)-phospho-L-histidyl-[protein] = D-mannitol 1-phosphate(in) + L-histidyl-[protein]. Its function is as follows. The phosphoenolpyruvate-dependent sugar phosphotransferase system (sugar PTS), a major carbohydrate active transport system, catalyzes the phosphorylation of incoming sugar substrates concomitantly with their translocation across the cell membrane. The enzyme II CmtAB PTS system is involved in D-mannitol transport. The chain is PTS system mannitol-specific EIICB component (mtlA) from Staphylococcus saprophyticus subsp. saprophyticus (strain ATCC 15305 / DSM 20229 / NCIMB 8711 / NCTC 7292 / S-41).